The chain runs to 367 residues: DNA replication and repair protein RecF (367 aa).

30–37 serves as a coordination point for ATP; it reads GANGSGKT.

It belongs to the RecF family.

It is found in the cytoplasm. In terms of biological role, the RecF protein is involved in DNA metabolism; it is required for DNA replication and normal SOS inducibility. RecF binds preferentially to single-stranded, linear DNA. It also seems to bind ATP. This Pseudomonas savastanoi pv. phaseolicola (strain 1448A / Race 6) (Pseudomonas syringae pv. phaseolicola (strain 1448A / Race 6)) protein is DNA replication and repair protein RecF.